A 590-amino-acid chain; its full sequence is Multidrug resistance ABC transporter ATP-binding and permease protein (590 aa).

6 helical membrane passes run 35–55 (YLFF…QLQV), 79–99 (IALY…LGIF), 150–170 (IPQA…MLQM), 176–196 (LAMI…MTFG), 261–281 (VMML…IYLI), and 292–312 (LGMM…ATFF). The ABC transmembrane type-1 domain occupies 38–317 (FIIGILAGIV…VATFFTELAK (280 aa)). The ABC transporter domain maps to 349-584 (LSARHVDFAY…HPLYAKYVSE (236 aa)). 382–389 (GPSGGGKS) serves as a coordination point for ATP.

It belongs to the ABC transporter superfamily. Multidrug exporter LmrA (TC 3.A.1.117.1) family. In terms of assembly, homodimer.

It localises to the cell membrane. It catalyses the reaction ATP + H2O + xenobioticSide 1 = ADP + phosphate + xenobioticSide 2.. In terms of biological role, efflux transporter for a variety of amphiphilic cationic compounds, including antibiotics. The chain is Multidrug resistance ABC transporter ATP-binding and permease protein (lmrA) from Lactococcus lactis subsp. lactis (strain IL1403) (Streptococcus lactis).